The chain runs to 113 residues: Probable leucocin-A immunity protein (113 aa).

The protein belongs to the immunity protein EntA family.

Its function is as follows. Imparts immunity to leucocin-A to naturally sensitive host strains. The protein is Probable leucocin-A immunity protein of Leuconostoc gelidum.